A 413-amino-acid polypeptide reads, in one-letter code: Argininosuccinate synthase (413 aa).

ATP-binding positions include 14 to 22 (AYSGGLDTS) and A41. Residues Y94 and S99 each coordinate L-citrulline. An ATP-binding site is contributed by G124. L-aspartate-binding residues include T126, N130, and D131. An L-citrulline-binding site is contributed by N130. The L-citrulline site is built by R134, S185, S194, E270, and Y282.

The protein belongs to the argininosuccinate synthase family. Type 1 subfamily. As to quaternary structure, homotetramer.

Its subcellular location is the cytoplasm. It catalyses the reaction L-citrulline + L-aspartate + ATP = 2-(N(omega)-L-arginino)succinate + AMP + diphosphate + H(+). It functions in the pathway amino-acid biosynthesis; L-arginine biosynthesis; L-arginine from L-ornithine and carbamoyl phosphate: step 2/3. The sequence is that of Argininosuccinate synthase from Hyphomonas neptunium (strain ATCC 15444).